The sequence spans 329 residues: Probable acyltransferase FabY (329 aa).

The region spanning 18-162 (YHLRVPQTEE…RHFLMIKPVA (145 aa)) is the N-acetyltransferase domain.

This sequence belongs to the acetyltransferase family. FabY subfamily.

It functions in the pathway lipid metabolism; fatty acid biosynthesis. In terms of biological role, supports initiation of fatty acid biosynthesis in the absence of FabH. The sequence is that of Probable acyltransferase FabY from Escherichia coli O157:H7.